The sequence spans 212 residues: Protein-L-isoaspartate O-methyltransferase (212 aa).

S60 is a catalytic residue.

This sequence belongs to the methyltransferase superfamily. L-isoaspartyl/D-aspartyl protein methyltransferase family.

It localises to the cytoplasm. The catalysed reaction is [protein]-L-isoaspartate + S-adenosyl-L-methionine = [protein]-L-isoaspartate alpha-methyl ester + S-adenosyl-L-homocysteine. In terms of biological role, catalyzes the methyl esterification of L-isoaspartyl residues in peptides and proteins that result from spontaneous decomposition of normal L-aspartyl and L-asparaginyl residues. It plays a role in the repair and/or degradation of damaged proteins. The protein is Protein-L-isoaspartate O-methyltransferase of Methanococcus maripaludis (strain C5 / ATCC BAA-1333).